The following is a 347-amino-acid chain: Actin-like protein MamK (347 aa).

ATP contacts are provided by residues K9, 20-21, and D76; that span reads TS. E143 is a binding site for Mg(2+). ATP-binding positions include 164-166, 218-222, and G289; these read AGT and KEQFS.

This sequence belongs to the FtsA/MreB family. MamK subfamily. As to quaternary structure, forms cytoplasmic filaments. Filaments are parallel (polar) and double-helical. MamK subunits from each of the two strands are juxtaposed, each monomer binds ADP. At cell poles and septa interacts with methyl-accepting chemotaxis protein Amb0944 (MCP10). Forms filaments with MamK-like protein.

It is found in the cytoplasm. It localises to the cytoskeleton. The protein resides in the magnetosome membrane. It catalyses the reaction ATP + H2O = ADP + phosphate + H(+). Its activity is regulated as follows. Filament turnover is promoted by MamJ and/or LimJ which have overlapping function; at least one other protein is required for turnover. MamK filament dynamics are probably required for the assembly or maintenance of the magnetosome chain. Its function is as follows. Protein with ATPase activity which forms dynamic cytoplasmic filaments (probably with paralog MamK-like) that organize magnetosomes into long chains running parallel to the long axis of the cell. Turnover of MamK filaments is probably promoted by MamK-like, which provides a monomer pool. Forms twisted filaments in the presence of ATP or GTP. Serves to close gaps between magnetosomes in the chain. Interaction with MCP10 is involved in controlling the response to magnetic fields, possibly by controlling flagellar rotation. Expression in E.coli yields a filament in the cell's longitudinal axis; the protein nucleates at several sites and one extremity of the filament is located at the cell pole. This chain is Actin-like protein MamK (mamK), found in Paramagnetospirillum magneticum (strain ATCC 700264 / AMB-1) (Magnetospirillum magneticum).